A 65-amino-acid polypeptide reads, in one-letter code: Large ribosomal subunit protein bL35 (65 aa).

The protein belongs to the bacterial ribosomal protein bL35 family.

This chain is Large ribosomal subunit protein bL35, found in Aeromonas hydrophila subsp. hydrophila (strain ATCC 7966 / DSM 30187 / BCRC 13018 / CCUG 14551 / JCM 1027 / KCTC 2358 / NCIMB 9240 / NCTC 8049).